A 283-amino-acid chain; its full sequence is S-methyl-5'-thioadenosine phosphorylase (283 aa).

Threonine 18 is a phosphate binding site. Lysine 51 is subject to N6-acetyllysine. Phosphate contacts are provided by residues 60 to 61 (RH) and 93 to 94 (TA). Residue methionine 196 participates in substrate binding. Threonine 197 lines the phosphate pocket. 220–222 (DYD) provides a ligand contact to substrate.

Belongs to the PNP/MTAP phosphorylase family. MTAP subfamily. As to quaternary structure, homotrimer.

It localises to the cytoplasm. Its subcellular location is the nucleus. It catalyses the reaction S-methyl-5'-thioadenosine + phosphate = 5-(methylsulfanyl)-alpha-D-ribose 1-phosphate + adenine. Its pathway is amino-acid biosynthesis; L-methionine biosynthesis via salvage pathway; S-methyl-5-thio-alpha-D-ribose 1-phosphate from S-methyl-5'-thioadenosine (phosphorylase route): step 1/1. Its function is as follows. Catalyzes the reversible phosphorylation of S-methyl-5'-thioadenosine (MTA) to adenine and 5-methylthioribose-1-phosphate. Involved in the breakdown of MTA, a major by-product of polyamine biosynthesis. Responsible for the first step in the methionine salvage pathway after MTA has been generated from S-adenosylmethionine. Has broad substrate specificity with 6-aminopurine nucleosides as preferred substrates. This is S-methyl-5'-thioadenosine phosphorylase from Bos taurus (Bovine).